The chain runs to 357 residues: DNA replication and repair protein RecF (357 aa).

30–37 (GANGSGKT) contributes to the ATP binding site.

The protein belongs to the RecF family.

Its subcellular location is the cytoplasm. Its function is as follows. The RecF protein is involved in DNA metabolism; it is required for DNA replication and normal SOS inducibility. RecF binds preferentially to single-stranded, linear DNA. It also seems to bind ATP. This is DNA replication and repair protein RecF from Escherichia fergusonii (strain ATCC 35469 / DSM 13698 / CCUG 18766 / IAM 14443 / JCM 21226 / LMG 7866 / NBRC 102419 / NCTC 12128 / CDC 0568-73).